The sequence spans 1215 residues: Kinesin-like protein KIN-7I (1215 aa).

Positions 3–327 (RIHVAVRARP…LQFASRALRV (325 aa)) constitute a Kinesin motor domain. 79-86 (GQTNSGKT) serves as a coordination point for ATP. 4 coiled-coil regions span residues 333-414 (VNEI…IENL), 571-646 (ESEA…AAYE), 708-855 (IRDY…KRDS), and 894-979 (DMEA…KEDM).

Belongs to the TRAFAC class myosin-kinesin ATPase superfamily. Kinesin family. KIN-7 subfamily.

The sequence is that of Kinesin-like protein KIN-7I from Oryza sativa subsp. japonica (Rice).